The chain runs to 660 residues: Pescadillo homolog (660 aa).

Disordered regions lie at residues 313 to 358 (VESD…SYSS) and 471 to 660 (PELY…EKKA). The span at 331–342 (EEKPSDAIDKFE) shows a compositional bias: basic and acidic residues. The 117-residue stretch at 360 to 476 (DPAQLFSRLT…ELKSPELYGP (117 aa)) folds into the BRCT domain. Residues 501–659 (LEEQQSEGEA…KRRRLEKEKK (159 aa)) adopt a coiled-coil conformation. Positions 504–566 (QQSEGEAIDA…EEGSEDEEES (63 aa)) are enriched in acidic residues. Basic and acidic residues predominate over residues 584 to 619 (VKGDKKMDAKTKAKLEAKKALERKKKSEAEDLERAK).

Belongs to the pescadillo family. In terms of assembly, component of the NOP7 complex, composed of ERB1, NOP7 and YTM1. The complex is held together by ERB1, which interacts with NOP7 via its N-terminal domain and with YTM1 via a high-affinity interaction between the seven-bladed beta-propeller domains of the 2 proteins. The NOP7 complex associates with the 66S pre-ribosome.

The protein resides in the nucleus. Its subcellular location is the nucleolus. It localises to the nucleoplasm. In terms of biological role, component of the NOP7 complex, which is required for maturation of the 25S and 5.8S ribosomal RNAs and formation of the 60S ribosome. This chain is Pescadillo homolog, found in Chaetomium globosum (strain ATCC 6205 / CBS 148.51 / DSM 1962 / NBRC 6347 / NRRL 1970) (Soil fungus).